The primary structure comprises 161 residues: MRLWFCLSFFVVLCLEHFPGTLADERNNRDYPIRTHLHGPHIPRNNRDYPIRTHLHGHHIPRNVPESEEKTEQFLRDLSEISRLQRRPPGFTPFRGKFHSQSLRDLSEISRLQRRPPGFTPFRGKFHSQSLRDMYEIKGFKSAHGRPRVCPPGEQCPIWVG.

The signal sequence occupies residues 1–23; that stretch reads MRLWFCLSFFVVLCLEHFPGTLA. Cys150 and Cys156 are joined by a disulfide. Val160 carries the valine amide modification.

The protein belongs to the bradykinin-related peptide family. In terms of tissue distribution, expressed by the skin glands.

It is found in the secreted. In terms of biological role, inhibits ACE with a Ki of 1.6 uM, and targets B2 bradykinin receptor (BDKRB2). Provokes contraction of smooth muscle preparation (ileum). In vivo, induces an early hyperalgesic effects in living rats after intraplantar injection. Inhibits the bradykinin-induced in vitro relaxation of rat arterial smooth muscle and constriction of intestinal smooth muscle. May target bradykinin receptors (BDKRB). The sequence is that of Kininogen-2 from Bombina orientalis (Oriental fire-bellied toad).